The chain runs to 238 residues: MGRKWNNIKEKKASKDANTSRIYAKFGREIYVAARQGEPDPELNQALKAVLERAKTYNVPKSIIDRAIEKAKGGSDESYEERRYEGFGPNGAMVIVDALTNNVNRTASDVRAAFGKNGGNMGVSGSVAYMFDRVAVIGFEGKTADEALEILMDADVDAKDIIEEDDTVIVYAEPDQFHAVQEAFRNAGIEEFSVAEFSMIAHNEVTLSEDVQAQFEKMIDAIEDLEDVQQVYHNVDLA.

Belongs to the TACO1 family. YeeN subfamily.

Its subcellular location is the cytoplasm. This Shouchella clausii (strain KSM-K16) (Alkalihalobacillus clausii) protein is Probable transcriptional regulatory protein ABC1956.